A 1084-amino-acid polypeptide reads, in one-letter code: Probable hemoglobin and hemoglobin-haptoglobin-binding protein 3 (1084 aa).

Positions Met1–Ala24 are cleaved as a signal peptide. 12 repeat units span residues Gln26–Asn29, Gln30–Asn33, Gln34–Asn37, Gln38–Asn41, Gln42–Asn45, Gln46–Asn49, Gln50–Asn53, Gln54–Asn57, Gln58–Asn61, Gln62–Asn65, Gln66–Asn69, and Gln70–Asn73. Residues Gln26–Asn73 are 12 X 4 AA tandem repeats of Q-P-T-N. The span at Gln26–Asn75 shows a compositional bias: low complexity. The tract at residues Gln26–Asn77 is disordered. The TonB box signature appears at Glu83–Ser90. Positions Asn95 to Lys220 constitute a TBDR plug domain. The 857-residue stretch at Asp228–Phe1084 folds into the TBDR beta-barrel domain. The TonB C-terminal box motif lies at Asn1067–Phe1084.

The protein belongs to the TonB-dependent receptor family. Hemoglobin/haptoglobin binding protein subfamily.

It localises to the cell outer membrane. Its function is as follows. Acts as a receptor for hemoglobin or the hemoglobin/haptoglobin complex of the human host and is required for heme uptake. The chain is Probable hemoglobin and hemoglobin-haptoglobin-binding protein 3 from Haemophilus influenzae (strain ATCC 51907 / DSM 11121 / KW20 / Rd).